The chain runs to 452 residues: Phosphoglucosamine mutase (452 aa).

The active-site Phosphoserine intermediate is the Ser104. Mg(2+)-binding residues include Ser104, Asp241, Asp243, and Asp245. Ser104 is subject to Phosphoserine.

It belongs to the phosphohexose mutase family. Mg(2+) is required as a cofactor. Activated by phosphorylation.

The enzyme catalyses alpha-D-glucosamine 1-phosphate = D-glucosamine 6-phosphate. Functionally, catalyzes the conversion of glucosamine-6-phosphate to glucosamine-1-phosphate. This is Phosphoglucosamine mutase from Arthrobacter sp. (strain FB24).